We begin with the raw amino-acid sequence, 527 residues long: Outer capsid protein VP5 (527 aa).

Positions 1-42 (MGKFIKQLSKFGKKVGGALTSNTAKKIYKTIGDTAVRFAESD) are involved in membrane permeabilization.

Belongs to the orbivirus VP5 family.

The protein resides in the virion. In terms of biological role, VP5 protein is one of the two proteins (with VP2) which constitute the virus particle outer capsid. Acts as a membrane permeabilization protein that mediates release of viral particles from endosomal compartments into the cytoplasm. Permeabilization activity is probably negatively regulated by VP2 and is triggered by endosomal degradation of VP2 and exposure to low pH. The polypeptide is Outer capsid protein VP5 (Segment-6) (Antilocapra americana (Pronghorn)).